Reading from the N-terminus, the 22-residue chain is Cytin chain B (22 aa).

The protein belongs to the protease inhibitor I13 (potato type I serine protease inhibitor) family. Heterodimer of an A chain and a B chain, linked by a disulfide bond.

Functionally, inhibitor of chymotrypsin. This chain is Cytin chain B, found in Theromyzon tessulatum (Duck leech).